A 490-amino-acid polypeptide reads, in one-letter code: Aspartyl/glutamyl-tRNA(Asn/Gln) amidotransferase subunit B (490 aa).

It belongs to the GatB/GatE family. GatB subfamily. In terms of assembly, heterotrimer of A, B and C subunits.

The enzyme catalyses L-glutamyl-tRNA(Gln) + L-glutamine + ATP + H2O = L-glutaminyl-tRNA(Gln) + L-glutamate + ADP + phosphate + H(+). It carries out the reaction L-aspartyl-tRNA(Asn) + L-glutamine + ATP + H2O = L-asparaginyl-tRNA(Asn) + L-glutamate + ADP + phosphate + 2 H(+). In terms of biological role, allows the formation of correctly charged Asn-tRNA(Asn) or Gln-tRNA(Gln) through the transamidation of misacylated Asp-tRNA(Asn) or Glu-tRNA(Gln) in organisms which lack either or both of asparaginyl-tRNA or glutaminyl-tRNA synthetases. The reaction takes place in the presence of glutamine and ATP through an activated phospho-Asp-tRNA(Asn) or phospho-Glu-tRNA(Gln). This chain is Aspartyl/glutamyl-tRNA(Asn/Gln) amidotransferase subunit B, found in Synechococcus sp. (strain JA-2-3B'a(2-13)) (Cyanobacteria bacterium Yellowstone B-Prime).